Consider the following 104-residue polypeptide: Flagellar hook-basal body complex protein FliE (104 aa).

This sequence belongs to the FliE family.

It is found in the bacterial flagellum basal body. This Salmonella newport (strain SL254) protein is Flagellar hook-basal body complex protein FliE.